Here is a 427-residue protein sequence, read N- to C-terminus: MGSVRTNRYSIVSSEEDGMKLATMAVANGFGNGKSKVHTRQQCRSRFVKKDGHCNVQFINVGEKGQRYLADIFTTCVDIRWRWMLVIFCLAFVLSWLFFGCVFWLIALLHGDLDASRESKACVSEVNSFTAAFLFSIETQTTIGYGFRCVTDECPVAVFMVVFQSIVGCIIDAFIIGAVMAKMAKPKKRNETLVFSHNAVIAMRDGKLCLMWRVGNLRKSHLVEAHVRAQLLKSRITSEGEYIPLDQIDINVGFDSGIDRIFLVSPITIVHEIDEDSPLYDLSKQDMDNADFEIVVILEGMVEATAMTTQCRSSYLANEILWGHRYEPVLFEEKHYYKVDYSRFHKTYEVPNTPLCSARDLAEKKYILSNANSFCYENEVALTSKEEDDSENGVPESTSTDTPPDIDLHNQASVPLEPRPLRRESEI.

Residues 1 to 81 lie on the Cytoplasmic side of the membrane; the sequence is MGSVRTNRYS…IFTTCVDIRW (81 aa). Cysteine 76 bears the S-nitrosocysteine mark. The helical transmembrane segment at 82 to 106 threads the bilayer; that stretch reads RWMLVIFCLAFVLSWLFFGCVFWLI. The Extracellular segment spans residues 107 to 128; that stretch reads ALLHGDLDASRESKACVSEVNS. The segment at residues 129–140 is an intramembrane region (helical; Pore-forming); sequence FTAAFLFSIETQ. An intramembrane region (pore-forming) is located at residues 141–147; that stretch reads TTIGYGF. Residues 142-147 carry the Selectivity filter motif; it reads TIGYGF. At 148–156 the chain is on the extracellular side; that stretch reads RCVTDECPV. A helical transmembrane segment spans residues 157–178; it reads AVFMVVFQSIVGCIIDAFIIGA. Residues 179 to 427 are Cytoplasmic-facing; sequence VMAKMAKPKK…PRPLRRESEI (249 aa). A polyphosphoinositide (PIP2)-binding region spans residues 181 to 208; the sequence is AKMAKPKKRNETLVFSHNAVIAMRDGKL. The interval 384-427 is disordered; that stretch reads SKEEDDSENGVPESTSTDTPPDIDLHNQASVPLEPRPLRRESEI. A PDZ-binding motif is present at residues 425-427; that stretch reads SEI.

Belongs to the inward rectifier-type potassium channel (TC 1.A.2.1) family. KCNJ2 subfamily. In terms of assembly, homotetramer. Homomultimeric and heteromultimeric association with KCNJ4/Kir2.3. Can form heteromeric channels with Kir2.6/KCNJ18. Associates, via its PDZ-recognition domain, with a complex containing LIN7A, LIN7B, LIN7C, DLG1, CASK and APBA1. In terms of processing, S-nitrosylation increases the open probability and inward rectifying currents. As to expression, highly expressed in the ventricle and skeletal muscle, moderately in cerebrum and cerebellum. Only low levels are detected in kidney or lung.

It is found in the cell membrane. Its subcellular location is the sarcolemma. The protein resides in the T-tubule. The catalysed reaction is K(+)(in) = K(+)(out). Activated by phosphatidylinositol 4,5 biphosphate (PtdIns(4,5)P2). Functionally, inward rectifier potassium channels are characterized by a greater tendency to allow potassium to flow into the cell rather than out of it. Their voltage dependence is regulated by the concentration of extracellular potassium; as external potassium is raised, the voltage range of the channel opening shifts to more positive voltages. The inward rectification is mainly due to the blockage of outward current by internal magnesium. Can be blocked by extracellular barium and cesium. Probably participates in establishing action potential waveform and excitability of neuronal and muscle tissues. This Oryctolagus cuniculus (Rabbit) protein is Inward rectifier potassium channel 2 (KCNJ2).